Consider the following 524-residue polypeptide: Metalloendopeptidase OMA1, mitochondrial (524 aa).

A mitochondrion-targeting transit peptide spans 1–13 (MSFICGLQSAARN). A propeptide spanning residues 14–143 (HVFFRFNSLS…RNFHTSPRFQ (130 aa)) is cleaved from the precursor. The Mitochondrial matrix portion of the chain corresponds to 144 to 195 (AAPVPLLLMILKPVQKLFAIIVGRGIRKWWQALPPNKKEVVKENIRKNKWKL). A cardiolipin-binding region spans residues 148–167 (PLLLMILKPVQKLFAIIVGR). The interval 165 to 195 (VGRGIRKWWQALPPNKKEVVKENIRKNKWKL) is stress-sensor region. A helical membrane pass occupies residues 196–216 (FLGLSSFGLLFVVFYFTHLEV). H327 contributes to the Zn(2+) binding site. Residue E328 is part of the active site. H331 and E392 together coordinate Zn(2+). The cysteines at positions 407 and 465 are disulfide-linked.

The protein belongs to the peptidase M48 family. Homooligomer. Zn(2+) serves as cofactor. In terms of processing, may form a redox-dependent disulfide bond. Exists in a semi-oxidized state and is activated by prolonged hypoxia. Post-translationally, autocatalytically cleaved in response to mitochondrial depolarization both at the N-terminus and C-terminus to generate the short active form (S-OMA1). Autocatalytic processing at the C-terminus takes place at residues 447-456. The S-OMA1 form is unstable. OMA1 pre-processing by AFG3L2 may participate in maturation before OMA1 autocatalytic cleavage. Degraded by YMEL1 in response to membrane depolarization. Protein turnover is regulated by prohibitin (PHB and PHB2), which promotes degradation of OMA1 in a cardiolipin-binding manner. As to expression, widely expressed, with strong expression in the heart, skeletal muscle, kidney and liver.

It is found in the mitochondrion inner membrane. Protease activity is activated upon autocatalytic cleavage in response to mitochondrial depolarization. In terms of biological role, metalloprotease that is part of the quality control system in the inner membrane of mitochondria. Activated in response to various mitochondrial stress, leading to the proteolytic cleavage of target proteins, such as OPA1, UQCC3 and DELE1. Involved in the fusion of the mitochondrial inner membranes by mediating cleavage of OPA1 at S1 position, generating the soluble OPA1 (S-OPA1), which cooperates with the membrane form (L-OPA1) to coordinate the fusion of mitochondrial inner membranes. Following stress conditions that induce loss of mitochondrial membrane potential, mediates cleavage of OPA1, leading to excess production of soluble OPA1 (S-OPA1) and negative regulation of mitochondrial fusion. Involved in mitochondrial safeguard in response to transient mitochondrial membrane depolarization (flickering) by catalyzing cleavage of OPA1, leading to excess production of S-OPA1, preventing mitochondrial hyperfusion. Also acts as a regulator of apoptosis: upon BAK and BAX aggregation, mediates cleavage of OPA1, leading to the remodeling of mitochondrial cristae and allowing the release of cytochrome c from mitochondrial cristae. In depolarized mitochondria, may also act as a backup protease for PINK1 by mediating PINK1 cleavage and promoting its subsequent degradation by the proteasome. May also cleave UQCC3 in response to mitochondrial depolarization. Also acts as an activator of the integrated stress response (ISR): in response to mitochondrial stress, mediates cleavage of DELE1 to generate the processed form of DELE1 (S-DELE1), which translocates to the cytosol and activates EIF2AK1/HRI to trigger the ISR. Its role in mitochondrial quality control is essential for regulating lipid metabolism as well as to maintain body temperature and energy expenditure under cold-stress conditions. Binds cardiolipin, possibly regulating its protein turnover. Required for the stability of the respiratory supercomplexes. The polypeptide is Metalloendopeptidase OMA1, mitochondrial (Homo sapiens (Human)).